A 388-amino-acid polypeptide reads, in one-letter code: Succinate--CoA ligase [ADP-forming] subunit beta (388 aa).

An ATP-grasp domain is found at 9–245; that stretch reads KELLKSYGLP…KSQENERELK (237 aa). ATP contacts are provided by residues lysine 46, 53–55, glutamate 100, tyrosine 103, and glutamate 108; that span reads GRG. Residues asparagine 200 and aspartate 214 each contribute to the Mg(2+) site. Residues asparagine 265 and 322–324 each bind substrate; that span reads GIV.

It belongs to the succinate/malate CoA ligase beta subunit family. Heterotetramer of two alpha and two beta subunits. The cofactor is Mg(2+).

The catalysed reaction is succinate + ATP + CoA = succinyl-CoA + ADP + phosphate. It carries out the reaction GTP + succinate + CoA = succinyl-CoA + GDP + phosphate. It participates in carbohydrate metabolism; tricarboxylic acid cycle; succinate from succinyl-CoA (ligase route): step 1/1. In terms of biological role, succinyl-CoA synthetase functions in the citric acid cycle (TCA), coupling the hydrolysis of succinyl-CoA to the synthesis of either ATP or GTP and thus represents the only step of substrate-level phosphorylation in the TCA. The beta subunit provides nucleotide specificity of the enzyme and binds the substrate succinate, while the binding sites for coenzyme A and phosphate are found in the alpha subunit. This Psychrobacter arcticus (strain DSM 17307 / VKM B-2377 / 273-4) protein is Succinate--CoA ligase [ADP-forming] subunit beta.